A 197-amino-acid chain; its full sequence is 3-isopropylmalate dehydratase small subunit (197 aa).

The protein belongs to the LeuD family. LeuD type 1 subfamily. Heterodimer of LeuC and LeuD.

The catalysed reaction is (2R,3S)-3-isopropylmalate = (2S)-2-isopropylmalate. It functions in the pathway amino-acid biosynthesis; L-leucine biosynthesis; L-leucine from 3-methyl-2-oxobutanoate: step 2/4. Catalyzes the isomerization between 2-isopropylmalate and 3-isopropylmalate, via the formation of 2-isopropylmaleate. The protein is 3-isopropylmalate dehydratase small subunit of Azobacteroides pseudotrichonymphae genomovar. CFP2.